A 191-amino-acid polypeptide reads, in one-letter code: MARLIDQFERLPGIGPRTAQRLALHLLNQPQEQIHQFADALLAARTQVGQCQTCFHLSADPECEICRNPERRNGVICVVADSRDLLALERTREFHGRYHVLGGLISPMDGIGPELLRVTELVQRISNEEISEVILALTPSVEGDTTSLYLGRLLKPFCSVSRIAYGLPMGSELEYADEVTLSRALEGRRPV.

The C4-type zinc-finger motif lies at 51-66; the sequence is CQTCFHLSADPECEIC. The Toprim domain maps to 74-168; that stretch reads GVICVVADSR…SVSRIAYGLP (95 aa).

Belongs to the RecR family.

Its function is as follows. May play a role in DNA repair. It seems to be involved in an RecBC-independent recombinational process of DNA repair. It may act with RecF and RecO. This Synechococcus sp. (strain CC9605) protein is Recombination protein RecR.